The sequence spans 318 residues: Death effector domain-containing protein (318 aa).

Positions 25 to 103 (SLHRMFDIVG…RHDLLPYVTL (79 aa)) constitute a DED domain. A disordered region spans residues 128–191 (PRALSDPEPR…SVTPDPKEKQ (64 aa)).

As to quaternary structure, interacts with CASP8, CASP10, KRT8, KRT18, CASP3 and FADD. Homodimerizes and heterodimerizes with DEDD2. In terms of processing, exists predominantly in a mono- or diubiquitinated form. As to expression, widely expressed with highest levels in testis. Within the testis, highly expressed in germ cells but not expressed in Sertoli cells.

Its subcellular location is the cytoplasm. The protein resides in the nucleus. The protein localises to the nucleolus. A scaffold protein that directs CASP3 to certain substrates and facilitates their ordered degradation during apoptosis. May also play a role in mediating CASP3 cleavage of KRT18. Regulates degradation of intermediate filaments during apoptosis. May play a role in the general transcription machinery in the nucleus and might be an important regulator of the activity of GTF3C3. Inhibits DNA transcription in vitro. This Rattus norvegicus (Rat) protein is Death effector domain-containing protein (Dedd).